Here is a 168-residue protein sequence, read N- to C-terminus: Putative postmeiotic segregation increased 2-like protein 3 (168 aa).

The 77-residue stretch at 8-84 folds into the KRAB domain; the sequence is VSFKDVAVDF…EGEFPCQHSP (77 aa).

Belongs to the DNA mismatch repair MutL/HexB family.

In Homo sapiens (Human), this protein is Putative postmeiotic segregation increased 2-like protein 3 (PMS2P3).